A 688-amino-acid polypeptide reads, in one-letter code: PTS system glucoside-specific EIICBA component (688 aa).

The PTS EIIC type-1 domain occupies 3 to 427 (KKLFGQLQRI…FKLKTPGRED (425 aa)). 10 consecutive transmembrane segments (helical) span residues 12–32 (IGKALMLPVAILPAAGILLAF), 81–101 (LGLAGGDGVAALAALVGYLIM), 137–157 (LVLGIPTLQTGVFGGIIMGAL), 182–202 (FVPIVTSVVAIATGVVLSFAW), 223–243 (LTTFIFGIIERSLIPFGLHHI), 284–304 (AFTTGKYPFMMFGLPAAAFAI), 315–335 (VVGGLMLSAGLTAFLTGITEP), 340–360 (FLFVAPVLYGIHVLLAGTSFL), 364–384 (LLGVKIGMTFSGGFIDYILYG), and 395–415 (LVIPVGIVYAIVYYFLFDFAI). Positions 438 to 519 (AKLPFDVLDA…AKIMSGEITK (82 aa)) constitute a PTS EIIB type-1 domain. Cys460 acts as the Phosphocysteine intermediate; for EIIB activity in catalysis. One can recognise a PTS EIIA type-1 domain in the interval 560 to 664 (DQVFAGKMMG…SIVTPMIITN (105 aa)). His612 acts as the Tele-phosphohistidine intermediate; for EIIA activity in catalysis.

The protein localises to the cell membrane. In terms of biological role, the phosphoenolpyruvate-dependent sugar phosphotransferase system (sugar PTS), a major carbohydrate active -transport system, catalyzes the phosphorylation of incoming sugar substrates concomitantly with their translocation across the cell membrane. This system is involved in alpha- and beta-glucoside transport. The protein is PTS system glucoside-specific EIICBA component (glcB) of Staphylococcus aureus (strain bovine RF122 / ET3-1).